The primary structure comprises 124 residues: Ribonuclease pancreatic (124 aa).

Positions 1–13 are enriched in basic and acidic residues; sequence SETAAEKFERQHM. A disordered region spans residues 1-23; it reads SETAAEKFERQHMDSYSSSSSNS. K7 and R10 together coordinate substrate. H12 (proton acceptor) is an active-site residue. 4 cysteine pairs are disulfide-bonded: C26-C84, C40-C95, C58-C110, and C65-C72. Residues 41-45, K66, and R85 contribute to the substrate site; that span reads KPVNT. Residue H119 is the Proton donor of the active site.

It belongs to the pancreatic ribonuclease family. As to quaternary structure, monomer. Interacts with and forms tight 1:1 complexes with RNH1. Dimerization of two such complexes may occur. Interaction with RNH1 inhibits this protein. Pancreas.

It localises to the secreted. It catalyses the reaction an [RNA] containing cytidine + H2O = an [RNA]-3'-cytidine-3'-phosphate + a 5'-hydroxy-ribonucleotide-3'-[RNA].. The enzyme catalyses an [RNA] containing uridine + H2O = an [RNA]-3'-uridine-3'-phosphate + a 5'-hydroxy-ribonucleotide-3'-[RNA].. Its function is as follows. Endonuclease that catalyzes the cleavage of RNA on the 3' side of pyrimidine nucleotides. Acts on single-stranded and double-stranded RNA. This is Ribonuclease pancreatic (RNASE1) from Camelus dromedarius (Dromedary).